A 343-amino-acid polypeptide reads, in one-letter code: N-malonyltransferase FDB2 (343 aa).

Residue cysteine 107 is the Acyl-thioester intermediate of the active site. Catalysis depends on histidine 155, which acts as the Proton acceptor. Aspartate 170 is a catalytic residue.

The protein belongs to the arylamine N-acetyltransferase family.

It functions in the pathway xenobiotic degradation. Its function is as follows. N-malonyltransferase; part of the Fusarium detoxification of benzoxazolinone cluster involved in the degradation of benzoxazolinones produced by the host plant. Maize, wheat, and rye produce the 2 benzoxazinone phytoanticipins 2,4-dihy-droxy-7-methoxy-1,4-benzoxazin-3-one (DIMBOA) and 2,4-dihydroxy-1,4-benzoxazin-3-one (DIBOA) that, due to their inherent instability once released, spontaneously degrade to the more stable corresponding benzoxazolinones, 6-methoxy-2-benzoxazolinone (MBOA) and 2-benzoxazolinone (BOA), respectively. The first step in the detoxification of benzoxazolinones involves the hydrolysis of the cyclic ester bond of benzoxazolinones by the gamma-lactamase FDB1 to aminophenols. FDB1 is able to convert BOA into 2-aminophenol (2-AP), as well as MBOA into 5-methoxy-2-aminophenol (2-AMP). The N-malonyltransferase FDB2 then metabolizes aminophenols via N-malonylation to non-toxic malonamic acids. FDB2 converts 2-AP into N-(2-hydroxyphenyl) malonamic acid (HPMA) and 2-AMP into N-(2-hydroxy-4-methoxyphenyl) malonamic acid (HMPMA). The cluster also contains 2 transcription factors (FDB3 and FPSE_08121), an aldo-keto reductase (FPSE_08125) that possibly associates with a ketone component of BOA and MBOA degradation, an esterase (FPSE_08126), an acyl-CoA transferase (FPSE_08120), a solute carrier protein (FPSE_08119) and a transmembrane transporter (FPSE_08127) proposed to shuttle metabolites of benzoxazolinone degradation. In Fusarium pseudograminearum (strain CS3096) (Wheat and barley crown-rot fungus), this protein is N-malonyltransferase FDB2.